A 453-amino-acid polypeptide reads, in one-letter code: Luminescence regulatory protein LuxO (453 aa).

The region spanning 1 to 112 (MVEDTASVAA…RLRVTVNNAI (112 aa)) is the Response regulatory domain. Position 47 is a 4-aspartylphosphate (D47). Positions 133–362 (FIGSSQTMQQ…LQNVLRNIVV (230 aa)) constitute a Sigma-54 factor interaction domain. ATP contacts are provided by residues 161-168 (GESGTGKE) and 224-233 (ADGGTLFLDE).

Functionally, acts negatively to control the expression of luminescence. At low cell density, LuxO is phosphorylated, and together with sigma-54, causes repression of the luxCDABEGH operon. This repression could be indirect, LuxO could activate a negative regulator of luminescence. At high cell density, LuxO is dephosphorylated and inactive, therefore the luxCDABEGH operon is not repressed and light is emitted. LuxO and sigma-54 have also a role in activating the production of siderophore and in regulating the rugose colony morphology phenotype. This chain is Luminescence regulatory protein LuxO (luxO), found in Vibrio campbellii (strain ATCC BAA-1116).